A 761-amino-acid chain; its full sequence is Prolyl oligopeptidase A (761 aa).

Residues serine 606, aspartate 690, and histidine 726 each act as charge relay system in the active site.

This sequence belongs to the peptidase S9A family. Monomer.

The catalysed reaction is Hydrolysis of Pro-|-Xaa &gt;&gt; Ala-|-Xaa in oligopeptides.. Housekeeping prolyl oligopeptidase (POP) that behaves like a conventional POP by cleaving peptide bonds on the C-terminal side of prolyl residues within peptides that are up to approximately 30 amino acids long. In Amanita bisporigera (Destroying angel), this protein is Prolyl oligopeptidase A.